We begin with the raw amino-acid sequence, 374 residues long: UPF0496 protein At3g28270 (374 aa).

The stretch at 171 to 210 (KVLTTQFERIKKQQESLLEEVSETRKKIQDEISNLEKKTL) forms a coiled coil. A run of 2 helical transmembrane segments spans residues 214–234 (VVFG…IATG) and 235–255 (VGAA…GWAG). A coiled-coil region spans residues 256-321 (VYTTLDKKKD…MLKLVDNAID (66 aa)).

It belongs to the UPF0496 family.

The protein resides in the membrane. In Arabidopsis thaliana (Mouse-ear cress), this protein is UPF0496 protein At3g28270.